A 353-amino-acid chain; its full sequence is Rhodopsin (353 aa).

Residues 1–36 are Extracellular-facing; that stretch reads MNGTEGPYFYIPMVNTTGIVRSPYEYPQYYLVNPAA. N-linked (GlcNAc...) asparagine glycosylation is found at Asn2 and Asn15. Residues 37–61 traverse the membrane as a helical segment; sequence YAALGAYMFLLILIGFPVNFLTLYV. Over 62–73 the chain is Cytoplasmic; sequence TIEHKKLRTPLN. A helical transmembrane segment spans residues 74 to 96; it reads YILLNLAVADLFMVFGGFTTTMY. Residues 97–110 are Extracellular-facing; it reads TSMHGYFVLGRLGC. A disulfide bond links Cys110 and Cys187. The helical transmembrane segment at 111–133 threads the bilayer; sequence NLEGFFATLGGEIALWSLVVLAV. Positions 134–136 match the 'Ionic lock' involved in activated form stabilization motif; that stretch reads ERW. The Cytoplasmic segment spans residues 134–152; it reads ERWMVVCKPISNFRFGEDH. Residues 153-173 traverse the membrane as a helical segment; that stretch reads AIMGLAFTWVMAAACAVPPLV. The Extracellular portion of the chain corresponds to 174–202; sequence GWSRYIPEGMQCSCGIDYYTRAEGFNNES. A glycan (N-linked (GlcNAc...) asparagine) is linked at Asn200. A helical membrane pass occupies residues 203–224; the sequence is FVIYMFVCHFLIPLVVVFFCYG. Over 225-252 the chain is Cytoplasmic; sequence RLLCAVKEAAAAQQESETTQRAEREVSR. The helical transmembrane segment at 253-274 threads the bilayer; the sequence is MVVIMVVAFLVCWCPYAGVAWY. Over 275–286 the chain is Extracellular; the sequence is IFTHQGSEFGPL. A helical transmembrane segment spans residues 287–308; that stretch reads FMTFPAFFAKSSSIYNPMIYIC. Lys296 is subject to N6-(retinylidene)lysine. Topologically, residues 309–353 are cytoplasmic; the sequence is MNKQFRQCMITTLCCGKNPFEEEEGASTTSKTEASSVSSSSVSPA. Residues Cys322 and Cys323 are each lipidated (S-palmitoyl cysteine). The segment at 329–353 is disordered; that stretch reads EEEEGASTTSKTEASSVSSSSVSPA. Residues 334–353 are compositionally biased toward low complexity; sequence ASTTSKTEASSVSSSSVSPA.

This sequence belongs to the G-protein coupled receptor 1 family. Opsin subfamily. In terms of processing, phosphorylated on some or all of the serine and threonine residues present in the C-terminal region. Contains one covalently linked retinal chromophore.

The protein resides in the membrane. The protein localises to the cell projection. It is found in the cilium. It localises to the photoreceptor outer segment. Functionally, photoreceptor required for image-forming vision at low light intensity. While most salt water fish species use retinal as chromophore, most freshwater fish use 3-dehydroretinal, or a mixture of retinal and 3-dehydroretinal. Light-induced isomerization of 11-cis to all-trans retinal triggers a conformational change that activates signaling via G-proteins. Subsequent receptor phosphorylation mediates displacement of the bound G-protein alpha subunit by arrestin and terminates signaling. This is Rhodopsin (rho) from Chelon auratus (Golden grey mullet).